A 114-amino-acid chain; its full sequence is Fumarate reductase subunit D (114 aa).

A run of 3 helical transmembrane segments spans residues 24–44 (VSAI…PFGL), 50–70 (LITF…TIFP), and 92–112 (GGFI…FAVI).

The protein belongs to the FrdD family. Part of an enzyme complex containing four subunits: a flavoprotein (FrdA), an iron-sulfur protein (FrdB), and two hydrophobic anchor proteins (FrdC and FrdD).

The protein localises to the cell inner membrane. In terms of biological role, anchors the catalytic components of the fumarate reductase complex to the cell membrane, binds quinones. In Haemophilus influenzae (strain PittEE), this protein is Fumarate reductase subunit D.